Here is a 149-residue protein sequence, read N- to C-terminus: Transcriptional regulator MraZ (149 aa).

2 consecutive SpoVT-AbrB domains span residues 7–54 (KYVN…GISH) and 83–126 (AVQL…QPQN).

This sequence belongs to the MraZ family. As to quaternary structure, forms oligomers.

The protein resides in the cytoplasm. It localises to the nucleoid. This Rickettsia felis (strain ATCC VR-1525 / URRWXCal2) (Rickettsia azadi) protein is Transcriptional regulator MraZ.